Reading from the N-terminus, the 427-residue chain is Aspartate aminotransferase, mitochondrial (427 aa).

The transit peptide at 1–26 directs the protein to the mitochondrion; the sequence is MALLKSRLLVGVARCQPCLAAVQGRA. Glycine 62, tryptophan 159, and asparagine 212 together coordinate substrate. Lysine 276 carries the N6-(pyridoxal phosphate)lysine modification. Residue arginine 404 coordinates substrate.

The protein belongs to the class-I pyridoxal-phosphate-dependent aminotransferase family. In terms of assembly, homodimer. Pyridoxal 5'-phosphate is required as a cofactor.

The protein resides in the mitochondrion matrix. It carries out the reaction L-aspartate + 2-oxoglutarate = oxaloacetate + L-glutamate. The enzyme catalyses L-kynurenine + 2-oxoglutarate = kynurenate + L-glutamate + H2O. Catalyzes the irreversible transamination of the L-tryptophan metabolite L-kynurenine to form kynurenic acid (KA). As a member of the malate-aspartate shuttle, it has a key role in the intracellular NAD(H) redox balance. Is important for metabolite exchange between mitochondria and cytosol, and for amino acid metabolism. The chain is Aspartate aminotransferase, mitochondrial (got2) from Xenopus tropicalis (Western clawed frog).